The primary structure comprises 109 residues: Flagellar hook-basal body complex protein FliE (109 aa).

The disordered stretch occupies residues Met1–Gly38. Residues Thr19–Gly38 show a composition bias toward basic and acidic residues.

It belongs to the FliE family.

It localises to the bacterial flagellum basal body. In Helicobacter pylori (strain P12), this protein is Flagellar hook-basal body complex protein FliE.